Consider the following 397-residue polypeptide: uncharacterized protein (397 aa).

The next 4 helical transmembrane spans lie at 22–42, 270–290, 327–347, and 362–382; these read ILTMLGIIIGVGSVIVVVAVG, IMTTIIGSIAGISLLVGGIGV, VVLTLIGGLVGIGIGYGGAAL, and VVCGGVLFSMLIGVIFGMLPA.

The protein belongs to the ABC-4 integral membrane protein family. In terms of assembly, part of a complex composed of YknX, YknY and YknZ. The complex interacts with YknW.

The protein resides in the cell membrane. It is found in the membrane raft. Part of an unusual four-component transporter, which is required for protection against the killing factor SdpC (sporulation-delaying protein). This is an uncharacterized protein from Bacillus subtilis (strain 168).